A 176-amino-acid chain; its full sequence is Large ribosomal subunit protein uL6 (176 aa).

Belongs to the universal ribosomal protein uL6 family. Part of the 50S ribosomal subunit.

Its function is as follows. This protein binds to the 23S rRNA, and is important in its secondary structure. It is located near the subunit interface in the base of the L7/L12 stalk, and near the tRNA binding site of the peptidyltransferase center. The polypeptide is Large ribosomal subunit protein uL6 (Lactobacillus delbrueckii subsp. bulgaricus (strain ATCC 11842 / DSM 20081 / BCRC 10696 / JCM 1002 / NBRC 13953 / NCIMB 11778 / NCTC 12712 / WDCM 00102 / Lb 14)).